The sequence spans 610 residues: Myoneurin (610 aa).

One can recognise a BTB domain in the interval 24–89 (CDCTVVIGEF…IYTGTLNLDS (66 aa)). The segment at 156–199 (SEVSTDSVQANPKPRALTKKSSQSKKKKKAFSSQKPGQSKAVQY) is disordered. Basic residues predominate over residues 171-185 (ALTKKSSQSKKKKKA). 2 consecutive short sequence motifs (nuclear localization signal) follow at residues 174–190 (KKSSQSKKKKKAFSSQK) and 257–262 (KRKRRK). C2H2-type zinc fingers lie at residues 302 to 324 (PMCNTCGKVFSEASSLRRHMRIH), 330 to 352 (YVCHLCGKAFTQCNQLKTHVRTH), 358 to 381 (YKCELCDKGFAQKCQLVFHSRMHH), 387 to 409 (YKCDVCNLQFATSSNLKIHARKH), 415 to 437 (YVCDRCGQRFAQASTLTYHVRRH), 443 to 465 (YVCDTCGKAFAVSSSLITHSRKH), 471 to 493 (YICGICGKSFISSGELNKHFRSH), and 499 to 522 (FICELCGNSYTDIKNLKKHKTKVH). The disordered stretch occupies residues 519–548 (TKVHSGTDKNPDCSVDDHAVSEQDSVQRSP). Residues 523-539 (SGTDKNPDCSVDDHAVS) are compositionally biased toward basic and acidic residues.

It belongs to the krueppel C2H2-type zinc-finger protein family. As to expression, mainly expressed in the neuromuscular system. Located in and around synaptic myonuclei in adult muscle. Expression is dysregulated after nerve injury. Also found in the cerebellum, testis, heart, brain and liver.

It localises to the nucleus. The polypeptide is Myoneurin (Mynn) (Mus musculus (Mouse)).